The following is a 481-amino-acid chain: Glutamyl-tRNA(Gln) amidotransferase subunit A (481 aa).

Residues K74 and S149 each act as charge relay system in the active site. S173 serves as the catalytic Acyl-ester intermediate.

This sequence belongs to the amidase family. GatA subfamily. Heterotrimer of A, B and C subunits.

The enzyme catalyses L-glutamyl-tRNA(Gln) + L-glutamine + ATP + H2O = L-glutaminyl-tRNA(Gln) + L-glutamate + ADP + phosphate + H(+). In terms of biological role, allows the formation of correctly charged Gln-tRNA(Gln) through the transamidation of misacylated Glu-tRNA(Gln) in organisms which lack glutaminyl-tRNA synthetase. The reaction takes place in the presence of glutamine and ATP through an activated gamma-phospho-Glu-tRNA(Gln). In Francisella tularensis subsp. tularensis (strain FSC 198), this protein is Glutamyl-tRNA(Gln) amidotransferase subunit A.